The primary structure comprises 245 residues: DNA polymerase sliding clamp 2 (245 aa).

The protein belongs to the PCNA family. As to quaternary structure, homotrimer. The subunits circularize to form a toroid; DNA passes through its center. Replication factor C (RFC) is required to load the toroid on the DNA.

Its function is as follows. Sliding clamp subunit that acts as a moving platform for DNA processing. Responsible for tethering the catalytic subunit of DNA polymerase and other proteins to DNA during high-speed replication. The polypeptide is DNA polymerase sliding clamp 2 (Sulfolobus acidocaldarius (strain ATCC 33909 / DSM 639 / JCM 8929 / NBRC 15157 / NCIMB 11770)).